Here is a 153-residue protein sequence, read N- to C-terminus: ATP synthase subunit a (153 aa).

A run of 2 helical transmembrane segments spans residues 43–63 and 104–124; these read AFHL…LLIF and IAPL…VDLI.

Belongs to the ATPase A chain family. F-type ATPases have 2 components, CF(1) - the catalytic core - and CF(0) - the membrane proton channel. CF(1) has five subunits: alpha(3), beta(3), gamma(1), delta(1), epsilon(1). CF(0) has three main subunits: a(1), b(2) and c(9-12). The alpha and beta chains form an alternating ring which encloses part of the gamma chain. CF(1) is attached to CF(0) by a central stalk formed by the gamma and epsilon chains, while a peripheral stalk is formed by the delta and b chains.

Its subcellular location is the cell inner membrane. Its function is as follows. Key component of the proton channel; it plays a direct role in the translocation of protons across the membrane. The chain is ATP synthase subunit a (atpB) from Pseudomonas putida (Arthrobacter siderocapsulatus).